A 493-amino-acid chain; its full sequence is Amino acid permease 2 (493 aa).

Residues 1–49 (MGETAAANNHRHHHHHGHQVFDVASHDFVPPQPAFKCFDDDGRLKRTGT) are Cytoplasmic-facing. Helical transmembrane passes span 50–70 (VWTA…LSLA) and 71–91 (WAIA…FSLV). The Cytoplasmic portion of the chain corresponds to 92 to 138 (TLYSSTLLSDCYRTGDAVSGKRNYTYMDAVRSILGGFKFKICGLIQY). A helical transmembrane segment spans residues 139-159 (LNLFGIAIGYTIAASISMMAI). Residues 160 to 175 (KRSNCFHKSGGKDPCH) lie on the Extracellular side of the membrane. A helical transmembrane segment spans residues 176–196 (MSSNPYMIVFGVAEILLSQVP). The Cytoplasmic portion of the chain corresponds to 197–200 (DFDQ). A helical membrane pass occupies residues 201 to 221 (IWWISIVAAVMSFTYSAIGLA). Residues 222–253 (LGIVQVAANGVFKGSLTGISIGTVTQTQKIWR) are Extracellular-facing. A helical membrane pass occupies residues 254-274 (TFQALGDIAFAYSYSVVLIEI). Residues 275-293 (QDTVRSPPAESKTMKKATK) are Cytoplasmic-facing. Residues 294-314 (ISIAVTTIFYMLCGSMGYAAF) form a helical membrane-spanning segment. The Extracellular portion of the chain corresponds to 315 to 340 (GDAAPGNLLTGFGFYNPFWLLDIANA). The chain crosses the membrane as a helical span at residues 341 to 361 (AIVVHLVGAYQVFAQPIFAFI). Residues 362–396 (EKSVAERYPDNDFLSKEFEIRIPGFKSPYKVNVFR) lie on the Cytoplasmic side of the membrane. The chain crosses the membrane as a helical span at residues 397 to 417 (MVYRSGFVVTTTVISMLMPFF). Residues 418-419 (ND) are Extracellular-facing. The chain crosses the membrane as a helical span at residues 420–440 (VVGILGALGFWPLTVYFPVEM). Residues 441 to 458 (YIKQRKVEKWSTRWVCLQ) are Cytoplasmic-facing. The helical transmembrane segment at 459–479 (MLSVACLVISVVAGVGSIAGV) threads the bilayer. Topologically, residues 480–493 (MLDLKVYKPFKSTY) are extracellular.

The protein belongs to the amino acid/polyamine transporter 2 family. Amino acid/auxin permease (AAAP) (TC 2.A.18.2) subfamily. Highly expressed in developing pods. Found in the vascular strands of siliques, cotyledons, leaves and roots, in the inner phloem of stems, and in the funiculi. Lower levels of expression in flowers. Not expressed in seeds.

It localises to the cell membrane. Inhibited by diethylpyrocarbonate (DEPC). Its function is as follows. Amino acid-proton symporter. Stereospecific transporter with a broad specificity for histidine, arginine, glutamate and neutral amino acids, favoring small amino acids such as alanine, asparagine and glutamine. Also accepts large aromatic residues such as phenlalanine or tyrosine. Has a much higher affinity for basic amino acids as compared with AAP1. May function in xylem-to-phloem transfer and in uptake of amino acids assimilated in the green silique tissue. This Arabidopsis thaliana (Mouse-ear cress) protein is Amino acid permease 2 (AAP2).